The chain runs to 351 residues: Protein disulfide isomerase CRELD2 (351 aa).

The N-terminal stretch at Met1–Ala21 is a signal peptide. Residues Cys28–Cys31 carry the CXXC motif. Cystine bridges form between Cys28–Cys31, Cys137–Cys151, Cys145–Cys163, and Cys165–Cys174. The region spanning Asp133 to Ser175 is the EGF-like 1 domain. The FU 1 repeat unit spans residues His190 to Pro237. Asn248 carries N-linked (GlcNAc...) asparagine glycosylation. The stretch at Ser250–Pro297 is one FU 2 repeat. Residues Cys260–Cys263 carry the CXXC motif. Cystine bridges form between Cys260/Cys263, Cys291/Cys305, Cys298/Cys314, and Cys316/Cys327. The EGF-like 2; calcium-binding domain maps to Asp287–Val328. The disordered stretch occupies residues Gln329–Leu351.

It belongs to the CRELD family. In terms of assembly, interacts with CHRNA4. Component of a complex containing at least CRELD2, MANF, MATN3 and PDIA4.

It is found in the endoplasmic reticulum. The enzyme catalyses Catalyzes the rearrangement of -S-S- bonds in proteins.. Its function is as follows. Protein disulfide isomerase. Might play a role in the unfolded protein response. May regulate transport of alpha4-beta2 neuronal acetylcholine receptor. This is Protein disulfide isomerase CRELD2 (CRELD2) from Bos taurus (Bovine).